Reading from the N-terminus, the 176-residue chain is Translation initiation factor IF-3 (176 aa).

This sequence belongs to the IF-3 family. In terms of assembly, monomer.

Its subcellular location is the cytoplasm. Its function is as follows. IF-3 binds to the 30S ribosomal subunit and shifts the equilibrium between 70S ribosomes and their 50S and 30S subunits in favor of the free subunits, thus enhancing the availability of 30S subunits on which protein synthesis initiation begins. This is Translation initiation factor IF-3 from Streptococcus pyogenes serotype M4 (strain MGAS10750).